A 3948-amino-acid polypeptide reads, in one-letter code: Hybrid PKS-NRPS synthetase ucsA (3948 aa).

The Ketosynthase family 3 (KS3) domain maps to 11–440; sequence NEPIAVIGSG…GTNAHAILER (430 aa). Catalysis depends on for beta-ketoacyl synthase activity residues Cys184, His323, and His363. The malonyl-CoA:ACP transacylase (MAT) domain stretch occupies residues 548-881; it reads IFTGQGAQWP…FSTAIGQLWA (334 aa). The N-terminal hotdog fold stretch occupies residues 940–1079; sequence HPLLGTLGAD…GHIRLTITDF (140 aa). Positions 940–1254 are dehydratase (DH) domain; the sequence is HPLLGTLGAD…IRLIPFAAAS (315 aa). Residues 940–1256 enclose the PKS/mFAS DH domain; that stretch reads HPLLGTLGAD…LIPFAAASEA (317 aa). His972 serves as the catalytic Proton acceptor; for dehydratase activity. A C-terminal hotdog fold region spans residues 1098-1256; the sequence is MTEVDQNLFY…LIPFAAASEA (159 aa). Asp1161 functions as the Proton donor; for dehydratase activity in the catalytic mechanism. The methyltransferase (MT) domain stretch occupies residues 1299–1460; it reads LAHVVGQITH…LRAGFTGVET (162 aa). The ketoreductase (KR) domain stretch occupies residues 1989–2165; sequence TYILFGLAGA…ASVIDIGPIS (177 aa). Positions 2275–2357 constitute a Carrier 1 domain; the sequence is DVARVLRHAI…GLVDFAVDNL (83 aa). Ser2317 carries the O-(pantetheine 4'-phosphoryl)serine modification. Low complexity predominate over residues 2381–2404; it reads PKAKTDAPAAAPTPASATAPGSKS. Residues 2381–2473 form a disordered region; the sequence is PKAKTDAPAA…SSQAASLESS (93 aa). 2 stretches are compositionally biased toward polar residues: residues 2405–2418 and 2426–2437; these read DGNV…ADQS and PQPTAILTNATA. Low complexity predominate over residues 2441–2456; it reads PVSPSLSVTGSTSSAA. The segment covering 2462–2473 has biased composition (polar residues); the sequence is PTSSQAASLESS. A condensation (C) domain region spans residues 2489–2926; sequence EKTLPMSYGQ…PQIFNSSKVQ (438 aa). Positions 2950 to 3355 are adenylation (A) (KR) domain; it reads DIAAVQPTLT…GEFVLQARIK (406 aa). A disordered region spans residues 3483 to 3507; that stretch reads PLTNKGGLKETPVARPTRYQNDPIP. The 80-residue stretch at 3513 to 3592 folds into the Carrier 2 domain; that stretch reads SSPFSSLDQV…QMASLLDGKD (80 aa). An O-(pantetheine 4'-phosphoryl)serine modification is found at Ser3552. The tract at residues 3633–3852 is reductase (R) domain; the sequence is LTGATGFLGL…QFVPVEDVAN (220 aa).

The protein in the C-terminal section; belongs to the NRP synthetase family.

It participates in mycotoxin biosynthesis. Hybrid PKS-NRPS synthetase; part of the gene cluster that mediates the biosynthesis of UCS1025A, a member of the pyrrolizidinone family that acts as a strong telomerase inhibitor and displays potent antibacterial and antitumor properties. These compounds share a hemiaminal-containing pyrrolizidinone core fused with a gamma-lactone, giving a furopyrrolizidine that is connected to a decalin fragment. The polyketide synthase module (PKS) of the PKS-NRPS ucsA is responsible for the synthesis of the polyketide backbone via the condensation of an acetyl-CoA starter unit with 6 malonyl-CoA units. The downstream nonribosomal peptide synthetase (NRPS) module then amidates the carboxyl end of the polyketide with a 2S,3S-methylproline derived from L-isoleucine by the 2-oxoglutarate-dependent dioxygenase ucsF which converts L-isoleucine to (4S,5S)-4-methylpyrroline-5-carboxylate that is further converted to 2S,3S-methylproline by the pyrroline-5-carboxylate reductase ucsG. Reductive release of the completed aminoacyl polyketide from the assembly line can form the 3-pyrrolin-2-one structure via an intramolecular Knoevenagel reaction. Because ucsA lacks a designated enoylreductase (ER) domain, the required activity is provided the enoyl reductase ucsL. This keto acyclic precursor is the substrate of the Diels-Alderase ucsH, that catalyzes the Diels-Alder cycloaddition. Oxidation of the 3S-methyl group to a carboxylate by the cytochrome P450 monooxygenase ucsK allows an oxa-Michael cyclization that might involve the reductase/dehydrogenase ucsI and which furnishes the furopyrrolizidine. The oxidase ucsJ likely plays a critical role in stereoselective reduction of the C5-C6 double bond to afford the required R-configured carboxylate group. Further enolization and oxidation at C5 by an unidentified enzyme affords the last intermediate that can undergo oxa-Michael cyclization to yield UCS1025A. The polypeptide is Hybrid PKS-NRPS synthetase ucsA (Acremonium sp).